The following is a 146-amino-acid chain: Fluoride-specific ion channel FluC (146 aa).

4 helical membrane passes run 8 to 28 (FAIALGGSIGAVLRYLITLTV), 47 to 67 (LANLLGCCALGGLFQFSQALV), 91 to 111 (IGVLGSLTTFSTLIGETAVFA), and 121 to 141 (MLLGINVIAGWCLFWAAAAVV). Na(+) is bound by residues G95 and T98.

This sequence belongs to the fluoride channel Fluc/FEX (TC 1.A.43) family.

The protein localises to the cell inner membrane. The catalysed reaction is fluoride(in) = fluoride(out). With respect to regulation, na(+) is not transported, but it plays an essential structural role and its presence is essential for fluoride channel function. In terms of biological role, fluoride-specific ion channel. Important for reducing fluoride concentration in the cell, thus reducing its toxicity. This chain is Fluoride-specific ion channel FluC, found in Rhodopirellula baltica (strain DSM 10527 / NCIMB 13988 / SH1).